Here is a 292-residue protein sequence, read N- to C-terminus: Non-homologous end joining protein Ku (292 aa).

Residues 9–187 (ITFGLVNVPV…TVPPITEREL (179 aa)) enclose the Ku domain. Low complexity predominate over residues 264-285 (AASAFPAAEKAPAGKNAATASA). Positions 264–292 (AASAFPAAEKAPAGKNAATASAKKARKLA) are disordered.

This sequence belongs to the prokaryotic Ku family. As to quaternary structure, homodimer. Interacts with LigD.

Functionally, with LigD forms a non-homologous end joining (NHEJ) DNA repair enzyme, which repairs dsDNA breaks with reduced fidelity. Binds linear dsDNA with 5'- and 3'- overhangs but not closed circular dsDNA nor ssDNA. Recruits and stimulates the ligase activity of LigD. This chain is Non-homologous end joining protein Ku, found in Leifsonia xyli subsp. xyli (strain CTCB07).